The following is a 460-amino-acid chain: Dihydroorotate dehydrogenase (quinone), mitochondrial (460 aa).

The transit peptide at 1-32 (MAGRAATSSAKWAREFLFRRVSSNPLGATRNC) directs the protein to the mitochondrion. The helical transmembrane segment at 53–69 (ILTGATIGLAIAGGAYV) threads the bilayer. FMN is bound by residues 141 to 145 (AGFDK) and Ser-165. Residue Lys-145 coordinates substrate. Position 190–194 (190–194 (NRCGF)) interacts with substrate. The segment at 213–245 (RMLAETSATSSSPSDDVKPGGKSGPGILGVNLG) is disordered. Residues Asn-243 and Asn-274 each coordinate FMN. Position 274–279 (274–279 (NVSSPN)) interacts with substrate. Ser-277 (nucleophile) is an active-site residue. Residues Lys-319 and Ser-347 each coordinate FMN. Residue 348-349 (NT) participates in substrate binding. Residues Gly-371, Gly-400, and 421 to 422 (YT) each bind FMN.

The protein belongs to the dihydroorotate dehydrogenase family. Type 2 subfamily. It depends on FMN as a cofactor.

It localises to the mitochondrion inner membrane. The catalysed reaction is (S)-dihydroorotate + a quinone = orotate + a quinol. It functions in the pathway pyrimidine metabolism; UMP biosynthesis via de novo pathway; orotate from (S)-dihydroorotate (quinone route): step 1/1. Catalyzes the conversion of dihydroorotate to orotate with quinone as electron acceptor. The chain is Dihydroorotate dehydrogenase (quinone), mitochondrial (PYRD) from Arabidopsis thaliana (Mouse-ear cress).